The sequence spans 978 residues: Chitin synthase 3 (978 aa).

Residues 1–13 (MGFNPQGQGNGPN) are compositionally biased toward low complexity. Disordered regions lie at residues 1-95 (MGFN…FDGH) and 108-127 (GHYP…YEYP). Residue N72 is glycosylated (N-linked (GlcNAc...) asparagine). N-linked (GlcNAc...) asparagine glycosylation occurs at N604. A run of 7 helical transmembrane segments spans residues 641-661 (LVNV…TTII), 686-706 (IVNV…FVLA), 719-739 (VLSF…TGYL), 775-795 (LIII…FLYL), 803-823 (SFPQ…VYAF), 908-928 (VILW…DDFI), and 946-966 (VLLY…LWFI).

This sequence belongs to the chitin synthase family. Class III subfamily.

It localises to the cell membrane. The enzyme catalyses [(1-&gt;4)-N-acetyl-beta-D-glucosaminyl](n) + UDP-N-acetyl-alpha-D-glucosamine = [(1-&gt;4)-N-acetyl-beta-D-glucosaminyl](n+1) + UDP + H(+). Its function is as follows. Polymerizes chitin, a structural polymer of the cell wall and septum, by transferring the sugar moiety of UDP-GlcNAc to the non-reducing end of the growing chitin polymer. Is essential for viability. This is Chitin synthase 3 from Fusarium oxysporum f. sp. lycopersici (strain 4287 / CBS 123668 / FGSC 9935 / NRRL 34936) (Fusarium vascular wilt of tomato).